Consider the following 100-residue polypeptide: Small ribosomal subunit protein uS17 (100 aa).

Belongs to the universal ribosomal protein uS17 family. As to quaternary structure, part of the 30S ribosomal subunit.

In terms of biological role, one of the primary rRNA binding proteins, it binds specifically to the 5'-end of 16S ribosomal RNA. The sequence is that of Small ribosomal subunit protein uS17 from Fervidobacterium nodosum (strain ATCC 35602 / DSM 5306 / Rt17-B1).